The sequence spans 480 residues: Glutamate--tRNA ligase (480 aa).

Positions 21–31 match the 'HIGH' region motif; it reads PSPTGYLHVGG. Zn(2+) is bound by residues Cys-110, Cys-112, Cys-137, and His-139. A 'KMSKS' region motif is present at residues 248-252; the sequence is KLSKR. Lys-251 provides a ligand contact to ATP.

It belongs to the class-I aminoacyl-tRNA synthetase family. Glutamate--tRNA ligase type 1 subfamily. Monomer. Zn(2+) is required as a cofactor.

The protein resides in the cytoplasm. The catalysed reaction is tRNA(Glu) + L-glutamate + ATP = L-glutamyl-tRNA(Glu) + AMP + diphosphate. In terms of biological role, catalyzes the attachment of glutamate to tRNA(Glu) in a two-step reaction: glutamate is first activated by ATP to form Glu-AMP and then transferred to the acceptor end of tRNA(Glu). In Haemophilus influenzae (strain ATCC 51907 / DSM 11121 / KW20 / Rd), this protein is Glutamate--tRNA ligase.